The primary structure comprises 118 residues: Evasin P546 (118 aa).

Residues 1–21 (MKVLLYIAASCLMLLALNVSA) form the signal peptide. 4 disulfides stabilise this stretch: cysteine 38-cysteine 59, cysteine 55-cysteine 96, cysteine 72-cysteine 101, and cysteine 91-cysteine 110. An N-linked (GlcNAc...) asparagine glycan is attached at asparagine 45.

Its subcellular location is the secreted. Its function is as follows. Salivary chemokine-binding protein which binds to host chemokines CCL1, CCL3, CCL5 and CCL22. The protein is Evasin P546 of Amblyomma cajennense (Cayenne tick).